The primary structure comprises 288 residues: Short chain aldehyde dehydrogenase 1 (288 aa).

Residues 26–28 (SGI), Asp-47, 72–73 (DV), and 99–101 (NAG) each bind NAD(+). The active-site Proton donor is the Ser-153. Substrate is bound by residues Ser-153 and Tyr-166. Residues Tyr-166, Lys-170, and Thr-201 each coordinate NAD(+). The Proton acceptor role is filled by Tyr-166. Catalysis depends on Lys-170, which acts as the Proton donor/acceptor.

It belongs to the short-chain dehydrogenases/reductases (SDR) family. In terms of assembly, homodimer. In terms of tissue distribution, expressed in mature seeds.

It catalyses the reaction 4,5,8-trihydroxycasbene + 2 NAD(+) = jolkinol C + 2 NADH + 2 H(+). It carries out the reaction a secondary alcohol + NAD(+) = a ketone + NADH + H(+). The catalysed reaction is a primary alcohol + NAD(+) = an aldehyde + NADH + H(+). It participates in secondary metabolite biosynthesis; terpenoid biosynthesis. In terms of biological role, involved in the biosynthesis of macrocyclic lathyrane type diterpenoids (also called Euphorbia factors) natural products, including the cyclization route from casbene to jolkinol C, a precursor for ingenol mebutate that is used to treat actinic keratosis, a precancerous skin condition. Catalyzes the conversion of 4,5,8-trihydroxycasbene into jolkinol C in presence of NAD. Also mediates the formation of casbene dione derivative and 4-ketocasbene from 4-hydroxy-8-ketocasbene and 4-hydroxycasbene, respectively. Together with CYP71D445, triggers the biosynthesis of 8-ketocasbene from 8-hydroxycasbene. This is Short chain aldehyde dehydrogenase 1 from Euphorbia lathyris (Caper spurge).